A 246-amino-acid chain; its full sequence is RNA polymerase sigma-B factor (246 aa).

The Polymerase core binding signature appears at 25–38 (DLIQEGNIGLMKAV). Residues 201-220 (LKELGEHFGFSRERARQLEI) constitute a DNA-binding region (H-T-H motif).

It belongs to the sigma-70 factor family.

In terms of biological role, sigma factors are initiation factors that promote the attachment of RNA polymerase to specific initiation sites and are then released. This sigma factor is essential for late-stage differentiation of M.xanthus. The chain is RNA polymerase sigma-B factor (sigB) from Myxococcus xanthus.